Consider the following 659-residue polypeptide: Cytochrome bo(3) ubiquinol oxidase subunit 1 (659 aa).

The Extracellular portion of the chain corresponds to 1–14 (MFGKLSLNSIPYHD). The chain crosses the membrane as a helical span at residues 15 to 35 (PIIMITCCVVILVFLVISIII). Residues 36-56 (TIAQKWQYLWNEWCCTVDHKK) are Cytoplasmic-facing. A helical membrane pass occupies residues 57–77 (IAKMYIFLAFIMLFRGFADAI). A ubiquinone is bound by residues Arg-71, Asp-75, and His-101. The Extracellular segment spans residues 78 to 109 (MMRMQQFLVSSYHGNGTGFLPPHHYDQIFTAH). A heme b-binding site is contributed by His-109. The helical transmembrane segment at 110–130 (GVIMIFFVAMPLVIGLMNFVV) threads the bilayer. Topologically, residues 131 to 148 (PLQIGSRDVAFPFLNNLS) are cytoplasmic. The helical transmembrane segment at 149-169 (LWLTIFSALLMNVSLGIGEFA) threads the bilayer. Over 170 to 192 (QTGWLAYPPLSELQYSPGVGVDY) the chain is Extracellular. Trp-173 serves as a coordination point for heme b. Residues 193–213 (WIWSLQISGIGTTLTAINFLV) traverse the membrane as a helical segment. Over 214–235 (TIIKMRSSGMNWFKIPVFTWTS) the chain is Cytoplasmic. Residues 236-256 (FCTNILIIASFPVLTVSLLLL) form a helical membrane-spanning segment. Residues 257 to 280 (TLDRYLGFHFFTNDFGGNMMMYVN) lie on the Extracellular side of the membrane. The helical transmembrane segment at 281–301 (LIWIWGHPEVYILILPVFGIF) threads the bilayer. His-287 contributes to the Cu(2+) binding site. The segment at residues 287-291 (HPEVY) is a cross-link (1'-histidyl-3'-tyrosine (His-Tyr)). Tyr-291 lines the Fe(II)-heme o pocket. Residues 302–318 (SEVVATFSSKELFGYTS) are Cytoplasmic-facing. A helical transmembrane segment spans residues 319 to 339 (LIWATIVITILSFIVWLHHFF). His-336 and His-337 together coordinate Cu(2+). At 340–350 (TMGASANVNAF) the chain is on the extracellular side. A helical transmembrane segment spans residues 351–371 (FGITTMIISIPTGVKIFNWLF). At 372-382 (TMYRGNVRINS) the chain is on the cytoplasmic side. The helical transmembrane segment at 383–403 (IMLWTIGFLITFSIGGMAGVL) threads the bilayer. The Extracellular portion of the chain corresponds to 404–416 (LSLPVIDFSLHNS). 2 residues coordinate Fe(II)-heme o: His-414 and His-422. Residues 417–437 (LFLVAHFHNVIIGGVVFGCFA) traverse the membrane as a helical segment. A heme b-binding site is contributed by His-424. The Cytoplasmic segment spans residues 438–459 (GITYWFPKLFGFMLSEKWGKRA). The chain crosses the membrane as a helical span at residues 460–480 (FWCWFFGFFCAFMPLYALGLM). Residues 481–499 (GMTRRLSQNINPQFHSMLT) are Extracellular-facing. Positions 484 and 485 each coordinate heme b. Residues 500–520 (IAALGTILIFIGIVFQIIQIF) form a helical membrane-spanning segment. Residues 521-587 (VSIRDRNLNR…KLPILYTSFH (67 aa)) lie on the Cytoplasmic side of the membrane. A helical membrane pass occupies residues 588-608 (MPKNTKFGFLIGFFAFLLGFS). Position 609 (Ala-609) is a topological domain, extracellular. Residues 610–630 (VWYIFWLFFISFFVIIYLLVI) form a helical membrane-spanning segment. The Cytoplasmic segment spans residues 631–659 (KSLDTNCDYIISIEEIKEIEKCINIKKMD).

Belongs to the heme-copper respiratory oxidase family. The cytochrome bo(3) ubiquinol oxidase complex is a heterooctamer of two A chains, two B chains, two C chains and two D chains. The cofactor is Cu(2+). Heme b is required as a cofactor. It depends on Fe(II)-heme o as a cofactor.

It is found in the cell membrane. It catalyses the reaction 2 a ubiquinol + O2 + n H(+)(in) = 2 a ubiquinone + 2 H2O + n H(+)(out). Its function is as follows. Cytochrome bo(3) ubiquinol oxidase is the terminal enzyme in the aerobic respiratory chain. Catalyzes the four-electron reduction of O2 to water, using a ubiquinol as a membrane soluble electron donor for molecular oxygen reduction. Has proton pump activity across the membrane in addition to electron transfer, pumping 2 protons/electron and generating a proton motive force. All the redox centers of this enzyme complex are located within the largest subunit, subunit I. Protons are probably pumped via D- and K- channels found in this subunit. This is Cytochrome bo(3) ubiquinol oxidase subunit 1 (cyoB) from Buchnera aphidicola subsp. Baizongia pistaciae (strain Bp).